The primary structure comprises 39 residues: Cytochrome b6-f complex subunit 5 (39 aa).

The chain crosses the membrane as a helical span at residues 5–25; it reads LLSGIVLGLVPVTILGLFVTA.

The protein belongs to the PetG family. As to quaternary structure, the 4 large subunits of the cytochrome b6-f complex are cytochrome b6, subunit IV (17 kDa polypeptide, PetD), cytochrome f and the Rieske protein, while the 4 small subunits are PetG, PetL, PetM and PetN. The complex functions as a dimer.

The protein resides in the plastid. The protein localises to the chloroplast thylakoid membrane. Component of the cytochrome b6-f complex, which mediates electron transfer between photosystem II (PSII) and photosystem I (PSI), cyclic electron flow around PSI, and state transitions. PetG is required for either the stability or assembly of the cytochrome b6-f complex. This chain is Cytochrome b6-f complex subunit 5, found in Pleurastrum terricola (Filamentous green alga).